We begin with the raw amino-acid sequence, 319 residues long: N-acetyllactosaminide alpha-1,3-galactosyltransferase-like 1 (319 aa).

Topologically, residues 1-6 (MQYKKE) are cytoplasmic. Residues 7 to 26 (ALLLMLFAVLLALTQRFSYS) traverse the membrane as a helical; Signal-anchor for type II membrane protein segment. The Lumenal portion of the chain corresponds to 27 to 319 (RTKDHLQKMY…IKHIKIAWKP (293 aa)). N-linked (GlcNAc...) asparagine glycans are attached at residues Asn89 and Asn101. Substrate-binding positions include 97-102 (FATGNF), 188-190 (AVN), and 210-213 (HAWW). The active-site Nucleophile is Glu278.

It belongs to the glycosyltransferase 6 family. The cofactor is Mn(2+).

It localises to the golgi apparatus. It is found in the golgi stack membrane. It catalyses the reaction a beta-D-galactosyl-(1-&gt;4)-N-acetyl-beta-D-glucosaminyl derivative + UDP-alpha-D-galactose = an alpha-D-galactosyl-(1-&gt;3)-beta-D-galactosyl-(1-&gt;4)-N-acetyl-beta-D-glucosaminyl derivative + UDP + H(+). It participates in protein modification; protein glycosylation. Synthesizes the galactose-alpha(1,3)-galactose group by catalyzing the transfer of a galactose residue, with an alpha-1,3 linkage, on terminal lactosaminide (Gal-beta-1,4-GlcNAc-R) disaccharide borne by a glycoprotein or a glycolipid. The polypeptide is N-acetyllactosaminide alpha-1,3-galactosyltransferase-like 1 (Ggta1l1) (Mus musculus (Mouse)).